We begin with the raw amino-acid sequence, 31 residues long: Cycloviolacin-O19 (31 aa).

A cross-link (cyclopeptide (Gly-Asp)) is located at residues 1–31; sequence GTLPCGESCVWIPCISSVVGCSCKSKVCYKD. Intrachain disulfides connect cysteine 5-cysteine 21, cysteine 9-cysteine 23, and cysteine 14-cysteine 28.

In terms of processing, this is a cyclic peptide. Expressed in petioles and runners but not in leaves, petals and roots (at protein level).

Probably participates in a plant defense mechanism. This Viola odorata (Sweet violet) protein is Cycloviolacin-O19.